The chain runs to 689 residues: MQNIDLISEKEAQKLLEELADKIAAYNHAYYIEDNPLVSDSEYDQLFNTNLKLEQKFPHLILENSPSKKVGAKIANKFAKVTHQVPMLSLSNAFDEQDVRDFVDRIKNFLRLNEFAPIFCEPKIDGLSFSAVYKNGVLTTGATRGDGYVGEDITANIKTIKNFPHKIDNVPEFLEVRGEIYIEKQDFLNLNKEQEEQGKDKFANPRNAAAGSLRQLDASITAKRPLKYFVYSGGVTEQNLASSQDQLLTKLKECGFNINEISKLASSEEEIFAFYEYLKTNREDLPYEIDGVVYKLNDFALQNRMGFIARSPRFATAHKFPAIIGQTQLLSITVQVGRTGTLTPVAELEPIEIGGVTVSRATLHNFQEIARKDVRIKDYVFLQRAGDVIPKIMGVDFDKRPNDTATFDTPLFCLSCNSKLHYMPEDIIIRCDNGLNCPAQNYERIRHFVSKNAMDIEGLGRKQVEFLIDKGLISNPLDIFFLKEKNDSSLAKLENMDGWGKKSVENLFKNIEKSKNVSLPRFIYALGIRHIGEQNAKLLAREVGSYNNFIAQMELLRTNEPDIYQKLNNLEGIGDKILVDIIDFFDVKENIELIKKLGEILNIEDYKETREQSSLTDKIVVFTGSLPTISRAEAKATAEKLGAKVTAGVSSNTDLVVAGVDAGSKLKKAKELNIKIIDEEEWLTLIKNV.

Residues 40–44 (DSEYD), 89–90 (SL), and glutamate 121 contribute to the NAD(+) site. The N6-AMP-lysine intermediate role is filled by lysine 123. NAD(+) contacts are provided by arginine 144, glutamate 179, lysine 295, and lysine 319. Positions 413, 416, 431, and 437 each coordinate Zn(2+). The region spanning 610 to 689 (REQSSLTDKI…EEWLTLIKNV (80 aa)) is the BRCT domain.

It belongs to the NAD-dependent DNA ligase family. LigA subfamily. Mg(2+) is required as a cofactor. It depends on Mn(2+) as a cofactor.

The enzyme catalyses NAD(+) + (deoxyribonucleotide)n-3'-hydroxyl + 5'-phospho-(deoxyribonucleotide)m = (deoxyribonucleotide)n+m + AMP + beta-nicotinamide D-nucleotide.. DNA ligase that catalyzes the formation of phosphodiester linkages between 5'-phosphoryl and 3'-hydroxyl groups in double-stranded DNA using NAD as a coenzyme and as the energy source for the reaction. It is essential for DNA replication and repair of damaged DNA. This chain is DNA ligase, found in Rickettsia massiliae (strain Mtu5).